We begin with the raw amino-acid sequence, 375 residues long: Alpha-2,8-sialyltransferase 8B (375 aa).

The Cytoplasmic segment spans residues methionine 1–arginine 6. The chain crosses the membrane as a helical; Signal-anchor for type II membrane protein span at residues serine 7 to alanine 23. Residues aspartate 24 to threonine 375 are Lumenal-facing. N-linked (GlcNAc...) asparagine glycosylation is found at asparagine 60, asparagine 72, asparagine 89, and asparagine 134. Intrachain disulfides connect cysteine 157–cysteine 307 and cysteine 171–cysteine 371. 2 residues coordinate CMP-N-acetyl-beta-neuraminate: asparagine 162 and asparagine 185. N-linked (GlcNAc...) asparagine glycans are attached at residues asparagine 219 and asparagine 234. The CMP-N-acetyl-beta-neuraminate site is built by threonine 294, threonine 295, glycine 296, tryptophan 316, tyrosine 329, and histidine 330. The active-site Proton donor/acceptor is the histidine 346.

This sequence belongs to the glycosyltransferase 29 family. In terms of processing, autopolysialylated. Autopolysialylation is not a prerequisite for the polysialylation acitity, but enhances the polysialylation acitity.

Its subcellular location is the golgi apparatus membrane. The protein resides in the secreted. The protein localises to the cell membrane. The enzyme catalyses [N-acetyl-alpha-D-neuraminosyl-(2-&gt;8)](n) + CMP-N-acetyl-beta-neuraminate = [N-acetyl-alpha-D-neuraminosyl-(2-&gt;8)](n+1) + CMP + H(+). It participates in protein modification; protein glycosylation. Catalyzes the transfer of a sialic acid from a CMP-linked sialic acid donor onto a terminal alpha-2,3-, alpha-2,6-, or alpha-2,8-linked sialic acid of an N-linked glycan acceptor through alpha-2,8-linkages. Therefore, participates in polysialic acid synthesis on various sialylated N-acetyllactosaminyl oligosaccharides (alpha-2,3-, alpha-2,6-, or alpha-2,8-linked sialic acid), including NCAM1, NCAM1 N-glycans, FETUB N-glycans, and to a lesser extent sialylparagloboside (SPG) and AHSG, which does not require the initial addition of an alpha 2,8-sialic acid. However, does not exhibit sialic acid-polymerase activity. Catalyzes polysialic acid synthesis in the hippocampal on NCAM1 and supports neurite outgrowth. ST8SIA2-mediated polysialylation influences on oligodendrocyte differentiation and may promote the integrity of myelin and axons. This Pan troglodytes (Chimpanzee) protein is Alpha-2,8-sialyltransferase 8B.